We begin with the raw amino-acid sequence, 157 residues long: 6,7-dimethyl-8-ribityllumazine synthase (157 aa).

5-amino-6-(D-ribitylamino)uracil is bound by residues Phe30, 64–66 (ALE), and 88–90 (CII). 93–94 (ET) contacts (2S)-2-hydroxy-3-oxobutyl phosphate. His96 (proton donor) is an active-site residue. Asn121 is a binding site for 5-amino-6-(D-ribitylamino)uracil. Arg135 is a (2S)-2-hydroxy-3-oxobutyl phosphate binding site.

It belongs to the DMRL synthase family.

The enzyme catalyses (2S)-2-hydroxy-3-oxobutyl phosphate + 5-amino-6-(D-ribitylamino)uracil = 6,7-dimethyl-8-(1-D-ribityl)lumazine + phosphate + 2 H2O + H(+). The protein operates within cofactor biosynthesis; riboflavin biosynthesis; riboflavin from 2-hydroxy-3-oxobutyl phosphate and 5-amino-6-(D-ribitylamino)uracil: step 1/2. Its function is as follows. Catalyzes the formation of 6,7-dimethyl-8-ribityllumazine by condensation of 5-amino-6-(D-ribitylamino)uracil with 3,4-dihydroxy-2-butanone 4-phosphate. This is the penultimate step in the biosynthesis of riboflavin. The sequence is that of 6,7-dimethyl-8-ribityllumazine synthase from Albidiferax ferrireducens (strain ATCC BAA-621 / DSM 15236 / T118) (Rhodoferax ferrireducens).